Consider the following 252-residue polypeptide: Hydroxyacylglutathione hydrolase (252 aa).

7 residues coordinate Zn(2+): histidine 54, histidine 56, aspartate 58, histidine 59, histidine 111, aspartate 130, and histidine 170.

Belongs to the metallo-beta-lactamase superfamily. Glyoxalase II family. In terms of assembly, monomer. It depends on Zn(2+) as a cofactor.

The enzyme catalyses an S-(2-hydroxyacyl)glutathione + H2O = a 2-hydroxy carboxylate + glutathione + H(+). Its pathway is secondary metabolite metabolism; methylglyoxal degradation; (R)-lactate from methylglyoxal: step 2/2. Its function is as follows. Thiolesterase that catalyzes the hydrolysis of S-D-lactoyl-glutathione to form glutathione and D-lactic acid. This is Hydroxyacylglutathione hydrolase from Francisella tularensis subsp. holarctica (strain FTNF002-00 / FTA).